Here is a 409-residue protein sequence, read N- to C-terminus: Beta-arrestin-2 (409 aa).

At Tyr-48 the chain carries Phosphotyrosine. A hydroxyproline; by PHD2 mark is found at Pro-176 and Pro-181. The interaction with TRAF6 stretch occupies residues 240 to 409 (ADICLFSTAQ…KDDDYDDQLC (170 aa)). Ser-360 carries the phosphoserine modification. Residues 363–409 (PETDVPVDTNLIEFDTNYATDDDIVFEDFARLRLKGMKDDDYDDQLC) are interaction with AP2B1. At Thr-382 the chain carries Phosphothreonine. Residues 385 to 395 (DIVFEDFARLR) carry the [DE]-X(1,2)-F-X-X-[FL]-X-X-X-R motif motif.

This sequence belongs to the arrestin family. As to quaternary structure, homooligomer; the self-association is mediated by InsP6-binding. Heterooligomer with ARRB1; the association is mediated by InsP6-binding. Interacts with ADRB2 and CHRM2. Interacts with PDE4A. Interacts with PDE4D. Interacts with MAPK10, MAPK1 and MAPK3. Interacts with DRD2. Interacts with FSHR. Interacts with CLTC. Interacts with HTR2C. Interacts with CCR5. Interacts with CXCR4. Interacts with SRC. Interacts with DUSP16; the interaction is interrupted by stimulation of AGTR1 and activation of MAPK10. Interacts with CHUK; the interaction is enhanced stimulation of ADRB2. Interacts with RELA. Interacts with MDM2; the interaction is enhanced by activation of GPCRs. Interacts with SLC9A5. Interacts with TRAF6. Interacts with IGF1R. Interacts with ENG. Interacts with KIR2DL1, KIR2DL3 and KIR2DL4. Interacts with LDLR. Interacts with AP2B1. Interacts with C5AR1. Interacts with RAF1. Interacts with MAP2K1. Interacts with MAPK1. Interacts with MAPK10; the interaction enhances MAPK10 activation by MAP3K5. Interacts with MAP2K4; the interaction is enhanced by presence of MAP3K5 and MAPK10. Interacts with MAP3K5. Interacts with AKT1. Interacts with IKBKB and MAP3K14. Interacts with SMO (activated). Interacts with GSK3A and GSK3B. Associates with protein phosphatase 2A (PP2A). Interacts with DHX8; the interaction is detected in the nucleus upon OR1D2 stimulation. Interacts with GAPDHS; the interaction is detected in the nucleus upon OR1D2 stimulation. Interacts with H2AFX; the interaction is detected in the nucleus upon OR1D2 stimulation. Interacts with KIF14; the interaction is detected in the nucleus upon OR1D2 stimulation. Interacts with RCC1; the interaction is detected in the nucleus upon OR1D2 stimulation. Interacts with CXCR4; the interaction is dependent on C-terminal phosphorylation of CXCR4 and allows activation of MAPK1 and MAPK3. Interacts with GPR143. Interacts with HCK and CXCR1 (phosphorylated). Interacts with ACKR3 and ACKR4. Interacts with ARRDC1; the interaction is direct. Interacts with GPR61, GPR62 and GPR135. Interacts (via NACHT and LRR domains) with NLRP3; this interaction is direct and inducible by omega-3 polyunsaturated fatty acids (PUFAs). Interacts with FFAR4 (via C-terminus); this interaction is stimulated by long-chain fatty acids (LCFAs). Interacts with GPR35. Interacts with GPR84. Interacts with TIGIT; this interaction inhibits the NF-kappa-B pathway. Interacts with TGFBR3. In terms of processing, phosphorylated at Thr-382 in the cytoplasm; probably dephosphorylated at the plasma membrane. The phosphorylation does not regulate internalization and recycling of ADRB2, interaction with clathrin or AP2B1. The ubiquitination status appears to regulate the formation and trafficking of beta-arrestin-GPCR complexes and signaling. Ubiquitination appears to occur GPCR-specific. Ubiquitinated by MDM2; the ubiquitination is required for rapid internalization of ADRB2. Deubiquitinated by USP33; the deubiquitination leads to a dissociation of the beta-arrestin-GPCR complex. Stimulation of a class A GPCR, such as ADRB2, induces transient ubiquitination and subsequently promotes association with USP33. Stimulation of a class B GPCR promotes a sustained ubiquitination. Deubiquitinated by USP20; allowing USP20 to deubiquitinate TRAF6 leading to inhibition of NF-kappa-B signaling. Post-translationally, hydroxylation by PHD2 modulates the rate of internalization by slowing down recruitment to the plasma membrane and inhibiting subsequent co-internalization with class A receptors.

The protein resides in the cytoplasm. Its subcellular location is the nucleus. The protein localises to the cell membrane. It localises to the membrane. It is found in the clathrin-coated pit. The protein resides in the cytoplasmic vesicle. Functionally, functions in regulating agonist-mediated G-protein coupled receptor (GPCR) signaling by mediating both receptor desensitization and resensitization processes. During homologous desensitization, beta-arrestins bind to the GPRK-phosphorylated receptor and sterically preclude its coupling to the cognate G-protein; the binding appears to require additional receptor determinants exposed only in the active receptor conformation. The beta-arrestins target many receptors for internalization by acting as endocytic adapters (CLASPs, clathrin-associated sorting proteins) and recruiting the GPRCs to the adapter protein 2 complex 2 (AP-2) in clathrin-coated pits (CCPs). However, the extent of beta-arrestin involvement appears to vary significantly depending on the receptor, agonist and cell type. Internalized arrestin-receptor complexes traffic to intracellular endosomes, where they remain uncoupled from G-proteins. Two different modes of arrestin-mediated internalization occur. Class A receptors, like ADRB2, OPRM1, ENDRA, D1AR and ADRA1B dissociate from beta-arrestin at or near the plasma membrane and undergo rapid recycling. Class B receptors, like AVPR2, AGTR1, NTSR1, TRHR and TACR1 internalize as a complex with arrestin and traffic with it to endosomal vesicles, presumably as desensitized receptors, for extended periods of time. Receptor resensitization then requires that receptor-bound arrestin is removed so that the receptor can be dephosphorylated and returned to the plasma membrane. Mediates endocytosis of CCR7 following ligation of CCL19 but not CCL21. Involved in internalization of P2RY1, P2RY4, P2RY6 and P2RY11 and ATP-stimulated internalization of P2RY2. Involved in phosphorylation-dependent internalization of OPRD1 and subsequent recycling or degradation. Involved in ubiquitination of IGF1R. Beta-arrestins function as multivalent adapter proteins that can switch the GPCR from a G-protein signaling mode that transmits short-lived signals from the plasma membrane via small molecule second messengers and ion channels to a beta-arrestin signaling mode that transmits a distinct set of signals that are initiated as the receptor internalizes and transits the intracellular compartment. Acts as a signaling scaffold for MAPK pathways such as MAPK1/3 (ERK1/2) and MAPK10 (JNK3). ERK1/2 and JNK3 activated by the beta-arrestin scaffold are largely excluded from the nucleus and confined to cytoplasmic locations such as endocytic vesicles, also called beta-arrestin signalosomes. Acts as a signaling scaffold for the AKT1 pathway. GPCRs for which the beta-arrestin-mediated signaling relies on both ARRB1 and ARRB2 (codependent regulation) include ADRB2, F2RL1 and PTH1R. For some GPCRs the beta-arrestin-mediated signaling relies on either ARRB1 or ARRB2 and is inhibited by the other respective beta-arrestin form (reciprocal regulation). Increases ERK1/2 signaling in AGTR1- and AVPR2-mediated activation (reciprocal regulation). Involved in CCR7-mediated ERK1/2 signaling involving ligand CCL19. Is involved in type-1A angiotensin II receptor/AGTR1-mediated ERK activity. Is involved in type-1A angiotensin II receptor/AGTR1-mediated MAPK10 activity. Is involved in dopamine-stimulated AKT1 activity in the striatum by disrupting the association of AKT1 with its negative regulator PP2A. Involved in AGTR1-mediated chemotaxis. Appears to function as signaling scaffold involved in regulation of MIP-1-beta-stimulated CCR5-dependent chemotaxis. Involved in attenuation of NF-kappa-B-dependent transcription in response to GPCR or cytokine stimulation by interacting with and stabilizing CHUK. Suppresses UV-induced NF-kappa-B-dependent activation by interacting with CHUK. The function is promoted by stimulation of ADRB2 and dephosphorylation of ARRB2. Involved in p53/TP53-mediated apoptosis by regulating MDM2 and reducing the MDM2-mediated degradation of p53/TP53. May serve as nuclear messenger for GPCRs. Upon stimulation of OR1D2, may be involved in regulation of gene expression during the early processes of fertilization. Also involved in regulation of receptors other than GPCRs. Involved in endocytosis of TGFBR2 and TGFBR3 and down-regulates TGF-beta signaling such as NF-kappa-B activation. Involved in endocytosis of low-density lipoprotein receptor/LDLR. Involved in endocytosis of smoothened homolog/Smo, which also requires GRK2. Involved in endocytosis of SLC9A5. Involved in endocytosis of ENG and subsequent TGF-beta-mediated ERK activation and migration of epithelial cells. Involved in Toll-like receptor and IL-1 receptor signaling through the interaction with TRAF6 which prevents TRAF6 autoubiquitination and oligomerization required for activation of NF-kappa-B and JUN. Involved in insulin resistance by acting as insulin-induced signaling scaffold for SRC, AKT1 and INSR. Involved in regulation of inhibitory signaling of natural killer cells by recruiting PTPN6 and PTPN11 to KIR2DL1. Involved in IL8-mediated granule release in neutrophils. Involved in the internalization of the atypical chemokine receptor ACKR3. Acts as an adapter protein coupling FFAR4 receptor to specific downstream signaling pathways, as well as mediating receptor endocytosis. During the activation step of NLRP3 inflammasome, directly associates with NLRP3 leading to inhibition of pro-inflammatory cytokine release and inhibition of inflammation. This chain is Beta-arrestin-2 (ARRB2), found in Homo sapiens (Human).